The sequence spans 327 residues: tRNA(Ile)-lysidine synthase (327 aa).

An ATP-binding site is contributed by 32–37; sequence SGGQDS.

This sequence belongs to the tRNA(Ile)-lysidine synthase family.

It localises to the cytoplasm. It catalyses the reaction cytidine(34) in tRNA(Ile2) + L-lysine + ATP = lysidine(34) in tRNA(Ile2) + AMP + diphosphate + H(+). Its function is as follows. Ligates lysine onto the cytidine present at position 34 of the AUA codon-specific tRNA(Ile) that contains the anticodon CAU, in an ATP-dependent manner. Cytidine is converted to lysidine, thus changing the amino acid specificity of the tRNA from methionine to isoleucine. This chain is tRNA(Ile)-lysidine synthase, found in Synechococcus sp. (strain JA-2-3B'a(2-13)) (Cyanobacteria bacterium Yellowstone B-Prime).